Consider the following 758-residue polypeptide: Calcium up-regulated protein E (758 aa).

The disordered stretch occupies residues 1-22 (MINIEDISKSSNQSEEKQLKST). Ricin B-type lectin domains are found at residues 25-145 (KPKY…WTTF) and 156-288 (GYFQ…WIAN).

Belongs to the cup family.

The protein localises to the cytoplasm. The protein resides in the membrane. Its function is as follows. May play an important role in stabilizing and/or regulating the cell membrane during Ca(2+) stress or certain stages of development. This chain is Calcium up-regulated protein E (cupE), found in Dictyostelium discoideum (Social amoeba).